The chain runs to 688 residues: Alpha-1,4-glucan:maltose-1-phosphate maltosyltransferase (688 aa).

Residues Lys-289, Gln-349, and Asp-384 each coordinate alpha-maltose 1-phosphate. Catalysis depends on Asp-420, which acts as the Nucleophile. An alpha-maltose 1-phosphate-binding site is contributed by Asn-421. The active-site Proton donor is the Glu-449. 560-561 (KY) is a binding site for alpha-maltose 1-phosphate.

It belongs to the glycosyl hydrolase 13 family. GlgE subfamily. In terms of assembly, homodimer.

The catalysed reaction is alpha-maltose 1-phosphate + [(1-&gt;4)-alpha-D-glucosyl](n) = [(1-&gt;4)-alpha-D-glucosyl](n+2) + phosphate. Functionally, maltosyltransferase that uses maltose 1-phosphate (M1P) as the sugar donor to elongate linear or branched alpha-(1-&gt;4)-glucans. Is involved in a branched alpha-glucan biosynthetic pathway from trehalose, together with TreS, Mak and GlgB. In Rhodospirillum rubrum (strain ATCC 11170 / ATH 1.1.1 / DSM 467 / LMG 4362 / NCIMB 8255 / S1), this protein is Alpha-1,4-glucan:maltose-1-phosphate maltosyltransferase.